Consider the following 671-residue polypeptide: UvrABC system protein B (671 aa).

One can recognise a Helicase ATP-binding domain in the interval 26-183; it reads EGLENGLAHQ…RRLSELQYSR (158 aa). 39–46 serves as a coordination point for ATP; that stretch reads GVTGSGKT. A Beta-hairpin motif is present at residues 92 to 115; that stretch reads YYDYYQPEAYVPSSDTFIEKDASV. The Helicase C-terminal domain occupies 431–593; sequence QVDDLLSEIR…IIPQGLNKKI (163 aa). Positions 631–666 constitute a UVR domain; sequence DQKIRELEAKMYTYAQNLEFEQAAELRDQVHQLRQQ.

This sequence belongs to the UvrB family. In terms of assembly, forms a heterotetramer with UvrA during the search for lesions. Interacts with UvrC in an incision complex.

Its subcellular location is the cytoplasm. Functionally, the UvrABC repair system catalyzes the recognition and processing of DNA lesions. A damage recognition complex composed of 2 UvrA and 2 UvrB subunits scans DNA for abnormalities. Upon binding of the UvrA(2)B(2) complex to a putative damaged site, the DNA wraps around one UvrB monomer. DNA wrap is dependent on ATP binding by UvrB and probably causes local melting of the DNA helix, facilitating insertion of UvrB beta-hairpin between the DNA strands. Then UvrB probes one DNA strand for the presence of a lesion. If a lesion is found the UvrA subunits dissociate and the UvrB-DNA preincision complex is formed. This complex is subsequently bound by UvrC and the second UvrB is released. If no lesion is found, the DNA wraps around the other UvrB subunit that will check the other stand for damage. The sequence is that of UvrABC system protein B from Yersinia pestis bv. Antiqua (strain Antiqua).